A 471-amino-acid polypeptide reads, in one-letter code: Protoporphyrinogen oxidase (471 aa).

FAD is bound by residues 16-21, 39-40, Ala-47, 61-64, Val-251, Trp-408, and 446-448; these read GGGISG, ES, GPNS, and VGL.

It belongs to the protoporphyrinogen/coproporphyrinogen oxidase family. Protoporphyrinogen oxidase subfamily. As to quaternary structure, monomer. Homodimer. The cofactor is FAD.

It is found in the cytoplasm. The protein resides in the cell membrane. It catalyses the reaction protoporphyrinogen IX + 3 O2 = protoporphyrin IX + 3 H2O2. The protein operates within porphyrin-containing compound metabolism; protoporphyrin-IX biosynthesis; protoporphyrin-IX from protoporphyrinogen-IX: step 1/1. With respect to regulation, strongly inhibited by acifluorfen. Its function is as follows. Catalyzes the 6-electron oxidation of protoporphyrinogen-IX to form protoporphyrin-IX. Does not oxidize coproporphyrinogen III. Involved in the classical protoporphyrin-dependent (PPD) heme b biosynthesis. This Myxococcus xanthus protein is Protoporphyrinogen oxidase.